The chain runs to 1319 residues: Girdin homolog (1319 aa).

A Calponin-homology (CH) domain is found at 6-118 (ENWSHPLAFW…KLLLLLLGCA (113 aa)). Coiled coils occupy residues 141–173 (ELAACIQKLTESDEIVQNLEDFERRKMKETDEV), 218–690 (TSEL…ADLI), and 732–1096 (KRER…KKST). The tract at residues 166–222 (KMKETDEVGGGGGSIEDVDSDDMESSTTSSSNGEIAIKQQDQSFLMSRSTSPTSELR) is disordered. Residues 204–222 (QQDQSFLMSRSTSPTSELR) show a composition bias toward polar residues. Disordered stretches follow at residues 1112–1236 (INRR…SPAH) and 1289–1308 (NVNLPQNPPDLPENSDLKPN). Over residues 1118-1131 (TSNGGSTTEDSSVY) the composition is skewed to polar residues.

Belongs to the CCDC88 family. In terms of tissue distribution, expressed in AQR and PQR gas-sensing neurons in hermaphrodites (at protein level).

It is found in the cytoplasm. Its subcellular location is the cytoskeleton. It localises to the cilium basal body. The protein resides in the microtubule organizing center. The protein localises to the centrosome. It is found in the centriole. Its function is as follows. Scaffolding protein that plays a role in ciliogenesis, cilium positioning and dendrite anchoring in sensory amphid neurons including AWB, AWA, AWC, ADL and ASI, the phasmid neurons PHA and PHB and the gas sensing neurons AQR, PQR, URX and BAG. Its role in cilium positioning may be through regulation of the localization of cell adhesion proteins such as the apical junction protein ajm-1, and the ciliary scaffolding protein Rootletin/che-10. Plays a more prominent role in regulating dendrite morphogenesis in AQR than in PQR neurons. Regulates localization of hmr-1 to the distal AQR dendrite. During embryonic elongation, required for the anchoring of URX and BAG dendrites to the presumptive nose. This Caenorhabditis elegans protein is Girdin homolog.